The primary structure comprises 337 residues: Alanine racemase (337 aa).

The active-site Proton acceptor; specific for D-alanine is the lysine 33. N6-(pyridoxal phosphate)lysine is present on lysine 33. Arginine 118 provides a ligand contact to substrate. Tyrosine 246 acts as the Proton acceptor; specific for L-alanine in catalysis. Substrate is bound at residue methionine 292.

It belongs to the alanine racemase family. Requires pyridoxal 5'-phosphate as cofactor.

It carries out the reaction L-alanine = D-alanine. Its pathway is amino-acid biosynthesis; D-alanine biosynthesis; D-alanine from L-alanine: step 1/1. In terms of biological role, catalyzes the interconversion of L-alanine and D-alanine. May also act on other amino acids. The sequence is that of Alanine racemase (alr) from Campylobacter curvus (strain 525.92).